The sequence spans 238 residues: MTHVEVVATIAPQLYIEETLIQKINHRIDAIDVLELRIDQIENVTVNQVAEMITKLKVMQDSFKLLVTYRTKLQGGYGQFTNDLYLNLISDLANINGIDMIDIEWQADIDIEKHQRIITHLQQYNKEVVISHHNFESTPPLDELQFIFFKMQKFNPEYVKLAVMPHNKNDVLNLLQAMSTFSDTMDCKVVGISMSKLGLISRTAQGVFGGALTYGCIGEPQAPGQIDVTDLKAQVTLY.

3-dehydroquinate is bound by residues glutamate 35–arginine 37 and arginine 70. Residue histidine 133 is the Proton donor/acceptor of the active site. Lysine 160 serves as the catalytic Schiff-base intermediate with substrate. 2 residues coordinate 3-dehydroquinate: arginine 202 and glutamine 225.

The protein belongs to the type-I 3-dehydroquinase family. Homodimer.

The catalysed reaction is 3-dehydroquinate = 3-dehydroshikimate + H2O. It participates in metabolic intermediate biosynthesis; chorismate biosynthesis; chorismate from D-erythrose 4-phosphate and phosphoenolpyruvate: step 3/7. Involved in the third step of the chorismate pathway, which leads to the biosynthesis of aromatic amino acids. Catalyzes the cis-dehydration of 3-dehydroquinate (DHQ) and introduces the first double bond of the aromatic ring to yield 3-dehydroshikimate. The protein is 3-dehydroquinate dehydratase of Staphylococcus aureus (strain bovine RF122 / ET3-1).